The chain runs to 623 residues: Chaperone protein DnaK (623 aa).

Residue Thr197 is modified to Phosphothreonine; by autocatalysis. Residues 595–615 (AENMYKKDEPNTANDKKKKDD) are compositionally biased toward basic and acidic residues. The interval 595–623 (AENMYKKDEPNTANDKKKKDDDVIDAEVE) is disordered.

The protein belongs to the heat shock protein 70 family.

In terms of biological role, acts as a chaperone. The sequence is that of Chaperone protein DnaK from Campylobacter jejuni subsp. doylei (strain ATCC BAA-1458 / RM4099 / 269.97).